Reading from the N-terminus, the 146-residue chain is Deoxyuridine 5'-triphosphate nucleotidohydrolase (146 aa).

Substrate contacts are provided by residues 66–68, asparagine 79, 83–85, and lysine 93; these read RSG and TVD.

It belongs to the dUTPase family. It depends on Mg(2+) as a cofactor.

The catalysed reaction is dUTP + H2O = dUMP + diphosphate + H(+). It participates in pyrimidine metabolism; dUMP biosynthesis; dUMP from dCTP (dUTP route): step 2/2. Its function is as follows. This enzyme is involved in nucleotide metabolism: it produces dUMP, the immediate precursor of thymidine nucleotides and it decreases the intracellular concentration of dUTP so that uracil cannot be incorporated into DNA. The protein is Deoxyuridine 5'-triphosphate nucleotidohydrolase of Fusobacterium nucleatum subsp. nucleatum (strain ATCC 25586 / DSM 15643 / BCRC 10681 / CIP 101130 / JCM 8532 / KCTC 2640 / LMG 13131 / VPI 4355).